Reading from the N-terminus, the 189-residue chain is GMP synthase [glutamine-hydrolyzing] subunit A (189 aa).

Positions 1-189 constitute a Glutamine amidotransferase type-1 domain; it reads MIVILNNGGQ…CKKCGFEFEE (189 aa). Cysteine 76 (nucleophile) is an active-site residue. Catalysis depends on residues histidine 163 and glutamate 165.

As to quaternary structure, heterodimer composed of a glutamine amidotransferase subunit (A) and a GMP-binding subunit (B).

It catalyses the reaction XMP + L-glutamine + ATP + H2O = GMP + L-glutamate + AMP + diphosphate + 2 H(+). It functions in the pathway purine metabolism; GMP biosynthesis; GMP from XMP (L-Gln route): step 1/1. Catalyzes the synthesis of GMP from XMP. This chain is GMP synthase [glutamine-hydrolyzing] subunit A, found in Methanococcus maripaludis (strain C7 / ATCC BAA-1331).